The chain runs to 302 residues: MKKIVVVCGPTAAGKSQLGMHLAQHLGVPVLSADSRQVYREFDIGTAKPTREEQRRVEHCLIDVAWPTEHFNVARYRELADAEIDRLTRQGKPALLVGGSGLYLRAVSGGLEPPAVPPDPALRARLAVERLDALYQRLQQLDPESAGRIHPNDQVRIERALEVCLTTGQPLSAQRRLRARDFSLLALGVGSGREALVRRIEQRTHRMIEAGWLEEVEYLRAKYGPDLPLLSTLGYAELGAYLEERWDLAEALQQIVVHTRQFAKRQMTWFRAEPDVHWLDESAGRQTLEQQSIEQVERFLAG.

Residue 9 to 16 (GPTAAGKS) coordinates ATP. A substrate-binding site is contributed by 11-16 (TAAGKS). Positions 34–37 (DSRQ) are interaction with substrate tRNA.

The protein belongs to the IPP transferase family. Monomer. Requires Mg(2+) as cofactor.

The catalysed reaction is adenosine(37) in tRNA + dimethylallyl diphosphate = N(6)-dimethylallyladenosine(37) in tRNA + diphosphate. In terms of biological role, catalyzes the transfer of a dimethylallyl group onto the adenine at position 37 in tRNAs that read codons beginning with uridine, leading to the formation of N6-(dimethylallyl)adenosine (i(6)A). This chain is tRNA dimethylallyltransferase, found in Gloeobacter violaceus (strain ATCC 29082 / PCC 7421).